An 85-amino-acid chain; its full sequence is MASFKIVIVCLALLVAVASARRRDMMSDDELDYHFSKRGIPCACDSDGPDIRSASLSGIVWMGSCPSGWKKCKSYYSIVADCCNQ.

A signal peptide spans 1–20; the sequence is MASFKIVIVCLALLVAVASA. A propeptide spanning residues 21 to 36 is cleaved from the precursor; it reads RRRDMMSDDELDYHFS. 3 cysteine pairs are disulfide-bonded: Cys-42–Cys-82, Cys-44–Cys-72, and Cys-65–Cys-83.

It belongs to the sea anemone sodium channel inhibitory toxin family. Type II subfamily. Expressed in ectodermal glands and in clumps outside of the extodermal layer. Is not expressed in nematocytes. In adult female tissues, shows similar expression levels in mesenteries (gametes-producing tissue), tentacles, pharynx and physa.

It localises to the secreted. Binds to site 3 of voltage-gated sodium channels and inhibits the inactivation process. Is highly active on DmNav1/TipE (drosophila) and is only extremely weakly active on rat Nav1.4-beta-1/SCN4A-SCN1B, and on human Nav1.5-beta-1/SCN5A-beta-1. This reveals high specificity for arthropod over mammalian channels. In vivo, when released into the medium, this recombinant toxin induces impaired swimming, paralysis and death of the crustacean A.nauplii within several hours. Also causes paralysis of cherry shrimps immediately after injection at very low doses. Its effect on zebrafish (D.rerio) larvae is also rapid, since it induces tail twitching accompanied by impaired swimming after 20 minutes and complete paralysis within 45 minutes. It has also been observed to cause death of zebrafish larvae within 1 hour. The sequence is that of Putative N.vectensis toxin 1 9 from Nematostella vectensis (Starlet sea anemone).